The following is a 117-amino-acid chain: MDWNWRILFLVVATTGAHSQVQLVQSWAEVRKSGASVKVSCSFSGFTITSYGIHWVQQSPGQGLEWMGWINPGNGSPSYAKKFQGRFTMTRDMSTTTAYTDLSSLTSEDMAVYYYAR.

The N-terminal stretch at 1–19 (MDWNWRILFLVVATTGAHS) is a signal peptide. The tract at residues 20-44 (QVQLVQSWAEVRKSGASVKVSCSFS) is framework-1. Positions 20-117 (QVQLVQSWAE…EDMAVYYYAR (98 aa)) constitute an Ig-like domain. The segment at 45–52 (GFTITSYG) is complementarity-determining-1. The framework-2 stretch occupies residues 53–69 (IHWVQQSPGQGLEWMGW). Residues 70 to 77 (INPGNGSP) are complementarity-determining-2. N-linked (GlcNAc...) asparagine glycosylation is present at Asn74. The framework-3 stretch occupies residues 78–115 (SYAKKFQGRFTMTRDMSTTTAYTDLSSLTSEDMAVYYY). A complementarity-determining-3 region spans residues 116–117 (AR).

Most probably, the immunoglobulin is not assembled due to incorrect folding of heavy chain. Immunoglobulins are composed of two identical heavy chains and two identical light chains; disulfide-linked.

It localises to the secreted. The protein localises to the cell membrane. In terms of biological role, probable non-functional open reading frame (ORF) of V region of the variable domain of immunoglobulin heavy chains. Non-functional ORF generally cannot participate in the synthesis of a productive immunoglobulin chain due to altered V-(D)-J or switch recombination and/or splicing site (at mRNA level) and/or conserved amino acid change (protein level). Immunoglobulins, also known as antibodies, are membrane-bound or secreted glycoproteins produced by B lymphocytes. In the recognition phase of humoral immunity, the membrane-bound immunoglobulins serve as receptors which, upon binding of a specific antigen, trigger the clonal expansion and differentiation of B lymphocytes into immunoglobulins-secreting plasma cells. Secreted immunoglobulins mediate the effector phase of humoral immunity, which results in the elimination of bound antigens. The antigen binding site is formed by the variable domain of one heavy chain, together with that of its associated light chain. Thus, each immunoglobulin has two antigen binding sites with remarkable affinity for a particular antigen. The variable domains are assembled by a process called V-(D)-J rearrangement and can then be subjected to somatic hypermutations which, after exposure to antigen and selection, allow affinity maturation for a particular antigen. This is Probable non-functional immunoglobulin heavy variable 1-38-4 from Homo sapiens (Human).